The sequence spans 704 residues: Protein cueball (704 aa).

The N-terminal stretch at 1–26 is a signal peptide; the sequence is MKSPCRAAAGWLVLLLSSCCLGYVIA. The Extracellular segment spans residues 27–594; sequence TEWAAAVTTD…TYCKESFNRT (568 aa). LDL-receptor class B repeat units follow at residues 69–119, 120–166, 199–242, and 243–288; these read GKLY…DHLE, RRLY…EATT, RHLY…DHYR, and NRLY…KNDY. Residues N152 and N219 are each glycosylated (N-linked (GlcNAc...) asparagine). EGF-like domains lie at 363 to 397, 432 to 478, and 514 to 551; these read TQQQGQLTVCLNNGTVNHHTNTCLCQPAFGGKLCE, DRNR…ARCE, and EEYSCNNYCLNGGHCTLGNETTVPECECGEEFAGQRCE. 8 disulfide bridges follow: C372/C385, C387/C396, C436/C446, C440/C465, C467/C477, C518/C528, C522/C539, and C541/C550. N375 is a glycosylation site (N-linked (GlcNAc...) asparagine). N-linked (GlcNAc...) asparagine glycosylation occurs at N450. Residue N532 is glycosylated (N-linked (GlcNAc...) asparagine). The N-linked (GlcNAc...) asparagine glycan is linked to N592. A helical transmembrane segment spans residues 595-615; sequence VVYTSLCFTVSFALLLAVVLV. At 616-704 the chain is on the cytoplasmic side; that stretch reads VSRMMKPPRP…NCGDGTAERK (89 aa).

Belongs to the cueball family.

It localises to the cell membrane. Its function is as follows. Has a role in spermatogenesis and oogenesis. The polypeptide is Protein cueball (Anopheles gambiae (African malaria mosquito)).